A 50-amino-acid chain; its full sequence is Large ribosomal subunit protein bL33 (50 aa).

This sequence belongs to the bacterial ribosomal protein bL33 family.

This Sulfurimonas denitrificans (strain ATCC 33889 / DSM 1251) (Thiomicrospira denitrificans (strain ATCC 33889 / DSM 1251)) protein is Large ribosomal subunit protein bL33.